Reading from the N-terminus, the 23-residue chain is Magainin-B2 (23 aa).

As to expression, expressed by the skin glands.

It localises to the secreted. In terms of biological role, has antimicrobial activity against Gram-negative bacterium E.coli ATCC 25922 (MIC=50 uM) and against fungus C.albicans ATCC 90028 (MIC=100 uM). Has no hemolytic activity against human erythrocytes even at high concentrations. In Xenopus borealis (Kenyan clawed frog), this protein is Magainin-B2.